A 74-amino-acid chain; its full sequence is Exodeoxyribonuclease 7 small subunit (74 aa).

This sequence belongs to the XseB family. In terms of assembly, heterooligomer composed of large and small subunits.

It is found in the cytoplasm. It catalyses the reaction Exonucleolytic cleavage in either 5'- to 3'- or 3'- to 5'-direction to yield nucleoside 5'-phosphates.. Its function is as follows. Bidirectionally degrades single-stranded DNA into large acid-insoluble oligonucleotides, which are then degraded further into small acid-soluble oligonucleotides. The chain is Exodeoxyribonuclease 7 small subunit from Synechococcus elongatus (strain ATCC 33912 / PCC 7942 / FACHB-805) (Anacystis nidulans R2).